Here is a 591-residue protein sequence, read N- to C-terminus: MKKISLPKIGIRPVIDGRRMGVRESLEEQTMNMAKATAALITEKIRHACGAQVECVIADTCIAGMAESAACEEKFSSQNVGVTITVTPCWCYGSETIDMDPMRPKAIWGFNGTERPGAVYLAAALAAHSQKGIPAFSIYGHDVQDADDTSIPADVEEKLLRFARAGLAVASMKGKSYLSVGGVSMGIAGSIVDHNFFESWLGMKVQAVDMTELRRRIDQKIYDEAELEMALAWADKNFRYGEDQNASQYKRNEAQNRAVLKESLLMAMCIRDMMQGNKTLADKGLVEESLGYNAIAAGFQGQRHWTDQYPNGDTAEALLNSSFDWNGIREPFVVATENDSLNGVAMLFGHQLTGTAQIFADVRTYWSPEAVERVTGQALSGLAEHGIIHLINSGSAALDGACKQRDSEGKPTMKPHWEISQQEADACLAATEWCPAIHEYFRGGGYSSRFLTEGGVPFTMTRVNIIKGLGPVLQIAEGWSVELPKAMHDQLDARTNSTWPTTWFAPRLTGKGPFTDVYSVMANWGANHGVLTIGHVGADFITLAAMLRIPVCMHNVEEAKIYRPSAWAAHGMDIEGQDYRACQNYGPLYKR.

Residues Glu337 and Asp361 each act as proton acceptor in the active site. The Mn(2+) site is built by Glu337, Asp361, and His528.

Belongs to the L-fucose isomerase family. In terms of assembly, homohexamer. It depends on Mn(2+) as a cofactor.

It is found in the cytoplasm. It catalyses the reaction L-fucose = L-fuculose. Its pathway is carbohydrate degradation; L-fucose degradation; L-lactaldehyde and glycerone phosphate from L-fucose: step 1/3. Its function is as follows. Converts the aldose L-fucose into the corresponding ketose L-fuculose. In Salmonella schwarzengrund (strain CVM19633), this protein is L-fucose isomerase.